A 569-amino-acid chain; its full sequence is Urease subunit alpha (569 aa).

The region spanning 131–569 (GGFDSHIHFI…LPMAQRYFLF (439 aa)) is the Urease domain. Residues histidine 136, histidine 138, and lysine 219 each coordinate Ni(2+). N6-carboxylysine is present on lysine 219. A substrate-binding site is contributed by histidine 221. Positions 248 and 274 each coordinate Ni(2+). The active-site Proton donor is the histidine 322. Aspartate 362 contributes to the Ni(2+) binding site.

It belongs to the metallo-dependent hydrolases superfamily. Urease alpha subunit family. Heterotrimer of UreA (gamma), UreB (beta) and UreC (alpha) subunits. Three heterotrimers associate to form the active enzyme. Requires Ni cation as cofactor. In terms of processing, carboxylation allows a single lysine to coordinate two nickel ions.

It is found in the cytoplasm. The catalysed reaction is urea + 2 H2O + H(+) = hydrogencarbonate + 2 NH4(+). It participates in nitrogen metabolism; urea degradation; CO(2) and NH(3) from urea (urease route): step 1/1. This is Urease subunit alpha from Ruegeria pomeroyi (strain ATCC 700808 / DSM 15171 / DSS-3) (Silicibacter pomeroyi).